Consider the following 411-residue polypeptide: Tyrosine--tRNA ligase (411 aa).

Residue Tyr-34 participates in L-tyrosine binding. The 'HIGH' region signature appears at 39-48; that stretch reads CTATSLHIGS. Positions 171 and 175 each coordinate L-tyrosine. Residues 231-235 carry the 'KMSKS' region motif; the sequence is KMGKT. Lys-234 serves as a coordination point for ATP. Residues 345-411 enclose the S4 RNA-binding domain; that stretch reads ISAYELFHEA…GKKKHILVRV (67 aa).

It belongs to the class-I aminoacyl-tRNA synthetase family. TyrS type 1 subfamily. Homodimer.

It is found in the cytoplasm. The catalysed reaction is tRNA(Tyr) + L-tyrosine + ATP = L-tyrosyl-tRNA(Tyr) + AMP + diphosphate + H(+). Catalyzes the attachment of tyrosine to tRNA(Tyr) in a two-step reaction: tyrosine is first activated by ATP to form Tyr-AMP and then transferred to the acceptor end of tRNA(Tyr). This is Tyrosine--tRNA ligase from Rickettsia conorii (strain ATCC VR-613 / Malish 7).